The primary structure comprises 542 residues: Protein MPA43 (542 aa).

This is Protein MPA43 (MPA43) from Saccharomyces cerevisiae (strain ATCC 204508 / S288c) (Baker's yeast).